A 351-amino-acid chain; its full sequence is LIM/homeobox protein ceh-14 (351 aa).

LIM zinc-binding domains follow at residues 46–105 (AICS…KFGT) and 105–169 (TKCS…ARDK). The homeobox DNA-binding region spans 180-239 (NKRPRTTISAKSLETLKQAYQTSSKPARHVREQLASETGLDMRVVQVWFQNRRAKEKRLK). Over residues 238–254 (LKKDAGRRWKSSNRAES) the composition is skewed to basic and acidic residues. The disordered stretch occupies residues 238-268 (LKKDAGRRWKSSNRAESDSNSPIESINGQSP). Over residues 255-268 (DSNSPIESINGQSP) the composition is skewed to polar residues.

In terms of assembly, interacts (via LIM zinc-binding domains 1 and 2) with lim-7 (via LID domain). May interact with itself. May interact with homeobox protein ceh-63. As to expression, expressed in the anterior AFDL/R sensory neurons and BDUL/R and ALA interneurons, and in PVT, PVQL/R, DVC, PVNL/R, PVWL/R, PVR, PHCL/R, PHAL/R and PHBL/R cells in the tail region.

It is found in the nucleus. Probable transcription factor, modulating expression of helix-loop-helix protein mbr-1 and homeobox protein ceh-63, perhaps acting in concert with ceh-63. Binds to a motif including the sequence 5'-CTAAT-3' in regulatory promoter elements. Confers thermosensory function to neurons. Required for correct AFD-mediated thermotaxis. In concert with homeobox protein ttx-1, perhaps as components in a complex, specifies identity of AFD neurons, acting by synergistically regulating receptor-type guanylyl cyclase gcy-8, gcy-18 and other genes. Involved in postembryonic differentiation of the ALA neuron, and regulation of genes that contribute to behavioral quiescence, a sleep-like behavior mediated by ALA. Regulates its own expression and also that of homeodomain ceh-17, together forming an autoregulatory loop in the ALA neuron. Required for initial pathfinding of the ALA axons, but largely dispensable for axon migration. Involved in regulating postembryonic axon maintenance in the ventral nerve cord, acting in concert with LIM homeobox protein lim-6, via modulation of expression of immunoglobulin domain zig genes in the interneuron PVT. Plays a role in controlling the peptidergic identity of the BDU neurons, regulating expression of flp-10, nlp-1, and nlp-15, thereby modulating the harsh touch response. The polypeptide is LIM/homeobox protein ceh-14 (ceh-14) (Caenorhabditis elegans).